The primary structure comprises 54 residues: Preprotein translocase subunit SecG (54 aa).

Topologically, residues 1–30 (MSKNKQDAGLSTSAGLVRYMDEDASKIKIA) are cytoplasmic. A helical transmembrane segment spans residues 31 to 52 (PEKVLGITISIMVLLFILNYGL). Over 53–54 (LA) the chain is Extracellular.

Belongs to the SEC61-beta family. In terms of assembly, component of the protein translocase complex. Heterotrimer consisting of alpha (SecY), beta (SecG) and gamma (SecE) subunits. Can form oligomers of the heterotrimer.

It is found in the cell membrane. Involved in protein export. The function of the beta subunit is unknown, but it may be involved in stabilization of the trimeric complex. In Methanococcus aeolicus (strain ATCC BAA-1280 / DSM 17508 / OCM 812 / Nankai-3), this protein is Preprotein translocase subunit SecG.